The chain runs to 223 residues: Deoxyribose-phosphate aldolase (223 aa).

Asp-89 acts as the Proton donor/acceptor in catalysis. The active-site Schiff-base intermediate with acetaldehyde is the Lys-152. Lys-181 (proton donor/acceptor) is an active-site residue.

Belongs to the DeoC/FbaB aldolase family. DeoC type 1 subfamily.

The protein localises to the cytoplasm. The enzyme catalyses 2-deoxy-D-ribose 5-phosphate = D-glyceraldehyde 3-phosphate + acetaldehyde. It participates in carbohydrate degradation; 2-deoxy-D-ribose 1-phosphate degradation; D-glyceraldehyde 3-phosphate and acetaldehyde from 2-deoxy-alpha-D-ribose 1-phosphate: step 2/2. Functionally, catalyzes a reversible aldol reaction between acetaldehyde and D-glyceraldehyde 3-phosphate to generate 2-deoxy-D-ribose 5-phosphate. The sequence is that of Deoxyribose-phosphate aldolase from Bacillus cereus (strain ATCC 10987 / NRS 248).